We begin with the raw amino-acid sequence, 187 residues long: Accessory gene regulator protein B (187 aa).

5 consecutive transmembrane segments (helical) span residues 49–69, 82–102, 107–127, 143–163, and 164–184; these read LAYI…FYLI, FWCY…VLHF, TLMM…APAA, YFSI…KEPY, and TQFI…IYYS.

Belongs to the AgrB family.

The protein localises to the cell membrane. Essential for the production of a quorum sensing system signal molecule, the autoinducing peptide (AIP). This quorum sensing system is responsible for the regulation of the expression of virulence factor genes. Involved in the proteolytic processing of AgrD, the precursor of AIP. The polypeptide is Accessory gene regulator protein B (Staphylococcus aureus (strain MRSA252)).